The following is a 449-amino-acid chain: N-succinylarginine dihydrolase (449 aa).

Residues Gly19–Ser28, Asn110, and His137–Arg138 contribute to the substrate site. A disordered region spans residues Tyr23–Arg43. Low complexity predominate over residues Ala27–Asn37. Glu174 is an active-site residue. Arg214 contacts substrate. The active site involves His250. Substrate is bound by residues Asp252 and Asn365. Catalysis depends on Cys371, which acts as the Nucleophile.

It belongs to the succinylarginine dihydrolase family. Homodimer.

The enzyme catalyses N(2)-succinyl-L-arginine + 2 H2O + 2 H(+) = N(2)-succinyl-L-ornithine + 2 NH4(+) + CO2. The protein operates within amino-acid degradation; L-arginine degradation via AST pathway; L-glutamate and succinate from L-arginine: step 2/5. Its function is as follows. Catalyzes the hydrolysis of N(2)-succinylarginine into N(2)-succinylornithine, ammonia and CO(2). The chain is N-succinylarginine dihydrolase from Pseudomonas putida (strain ATCC 700007 / DSM 6899 / JCM 31910 / BCRC 17059 / LMG 24140 / F1).